The primary structure comprises 376 residues: Cytochrome c oxidase subunit 2, mitochondrial (376 aa).

The chain crosses the membrane as a helical span at residues 164-184 (IFFFLVQILVFVLWVLSRALW). Topologically, residues 185 to 204 (CFRSKISPIPQRIVHGTTIE) are mitochondrial matrix. Residues 205 to 225 (ILWTILPSIILMFIAIPSFTL) form a helical membrane-spanning segment. Over 226 to 376 (LYSMDDVVVD…YGSWVSNQIQ (151 aa)) the chain is Mitochondrial intermembrane. Positions 309, 344, 346, 348, 352, and 355 each coordinate Cu cation. Glutamate 346 is a binding site for Mg(2+).

Belongs to the cytochrome c oxidase subunit 2 family. As to quaternary structure, component of the cytochrome c oxidase (complex IV, CIV), a multisubunit enzyme composed of a catalytic core of 3 subunits and several supernumerary subunits. The complex exists as a monomer or a dimer and forms supercomplexes (SCs) in the inner mitochondrial membrane with ubiquinol-cytochrome c oxidoreductase (cytochrome b-c1 complex, complex III, CIII). Requires Cu cation as cofactor.

It localises to the mitochondrion inner membrane. It catalyses the reaction 4 Fe(II)-[cytochrome c] + O2 + 8 H(+)(in) = 4 Fe(III)-[cytochrome c] + 2 H2O + 4 H(+)(out). Its function is as follows. Component of the cytochrome c oxidase, the last enzyme in the mitochondrial electron transport chain which drives oxidative phosphorylation. The respiratory chain contains 3 multisubunit complexes succinate dehydrogenase (complex II, CII), ubiquinol-cytochrome c oxidoreductase (cytochrome b-c1 complex, complex III, CIII) and cytochrome c oxidase (complex IV, CIV), that cooperate to transfer electrons derived from NADH and succinate to molecular oxygen, creating an electrochemical gradient over the inner membrane that drives transmembrane transport and the ATP synthase. Cytochrome c oxidase is the component of the respiratory chain that catalyzes the reduction of oxygen to water. Electrons originating from reduced cytochrome c in the intermembrane space (IMS) are transferred via the dinuclear copper A center (CU(A)) of subunit 2 and heme A of subunit 1 to the active site in subunit 1, a binuclear center (BNC) formed by heme A3 and copper B (CU(B)). The BNC reduces molecular oxygen to 2 water molecules using 4 electrons from cytochrome c in the IMS and 4 protons from the mitochondrial matrix. This is Cytochrome c oxidase subunit 2, mitochondrial (COX2) from Vigna unguiculata (Cowpea).